Here is a 698-residue protein sequence, read N- to C-terminus: Polyribonucleotide nucleotidyltransferase (698 aa).

Mg(2+) contacts are provided by Asp488 and Asp494. The 60-residue stretch at 555 to 614 folds into the KH domain; it reads PRLLTIRIDPDKIRDVIGKGGATIRALTEETGTTIDISDDGKVTIASADKAAADEARRRI. The S1 motif domain maps to 624 to 692; that stretch reads GTVYEGKVSK…RQGRIRLSMK (69 aa).

It belongs to the polyribonucleotide nucleotidyltransferase family. Component of the RNA degradosome, which is a multiprotein complex involved in RNA processing and mRNA degradation. Requires Mg(2+) as cofactor.

The protein localises to the cytoplasm. It catalyses the reaction RNA(n+1) + phosphate = RNA(n) + a ribonucleoside 5'-diphosphate. Its function is as follows. Involved in mRNA degradation. Catalyzes the phosphorolysis of single-stranded polyribonucleotides processively in the 3'- to 5'-direction. This Alkalilimnicola ehrlichii (strain ATCC BAA-1101 / DSM 17681 / MLHE-1) protein is Polyribonucleotide nucleotidyltransferase.